Here is a 164-residue protein sequence, read N- to C-terminus: Large ribosomal subunit protein uL23 (164 aa).

The segment at 1-41 is disordered; it reads MPAKAASAAASKKNSAPKSAVSKKVAKKGAPAAAAKPTKVV.

The protein belongs to the universal ribosomal protein uL23 family.

Its function is as follows. This protein binds to a specific region on the 26S rRNA. The polypeptide is Large ribosomal subunit protein uL23 (RPL23A) (Trypanosoma brucei brucei).